Here is an 869-residue protein sequence, read N- to C-terminus: Iron-sulfur cluster assembly SufBD family protein ML0593 (869 aa).

Residues 344 to 477 (LLGLWLGDGH…VRQLAIGCGL (134 aa)) enclose the DOD-type homing endonuclease domain.

This sequence belongs to the iron-sulfur cluster assembly SufBD family. This protein undergoes a protein self splicing that involves a post-translational excision of the intervening region (intein) followed by peptide ligation.

The sequence is that of Iron-sulfur cluster assembly SufBD family protein ML0593 from Mycobacterium leprae (strain TN).